We begin with the raw amino-acid sequence, 426 residues long: MKHLTEMVRRHKEGKTNGIYAVCSAHPLVLEAAIRYACANQTPLLIEATSNQVDQFGGYTGMTPADFRGFVCQLAESLNFPQDALILGGDHLGPNRWQNLPAAQAMANADDLIKSYVAAGFKKIHLDCSMSCQDDPVPLTDDIVAERAARLAKVAEETCREHFGEADLVYVIGTEVPVPGGAHETLSELAVTTPDAARATLEAHRHAFEKQGLSAIWPRIIALVVQPGVEFDHTNVIDYQPVKATALSQMVENYETLIFEAHSTDYQTPQSLRQLVIDHFAILKVGPALTFALREALFSLAAIEEELVPAKACSGLRQVLENVMLDRPEYWQSHYHGDGNARRLARGYSYSDRVRYYWPDSQIDDAFAHLVRNLADSPIPLPLISQYLPLQYVKVRSGELQPTPRELIINHIQDILAQYRTACEGQ.

Belongs to the GatZ/KbaZ family. KbaZ subfamily. In terms of assembly, forms a complex with KbaY.

It participates in carbohydrate metabolism; D-tagatose 6-phosphate degradation; D-glyceraldehyde 3-phosphate and glycerone phosphate from D-tagatose 6-phosphate: step 2/2. In terms of biological role, component of the tagatose-1,6-bisphosphate aldolase KbaYZ that is required for full activity and stability of the Y subunit. Could have a chaperone-like function for the proper and stable folding of KbaY. When expressed alone, KbaZ does not show any aldolase activity. This chain is D-tagatose-1,6-bisphosphate aldolase subunit KbaZ, found in Escherichia fergusonii (strain ATCC 35469 / DSM 13698 / CCUG 18766 / IAM 14443 / JCM 21226 / LMG 7866 / NBRC 102419 / NCTC 12128 / CDC 0568-73).